A 144-amino-acid chain; its full sequence is Glycine-rich protein HC1 (144 aa).

A helical transmembrane segment spans residues 5–25 (IFLLLGLSIAFAILISSEVAA). Repeat copies occupy residues 37–42 (GYNNGG), 43–48 (GYHNGG), 50–55 (GYNNGG), 56–61 (GYHNGG), 63–68 (GYNNGG), 69–74 (GYHNGG), 76–81 (GYNNGG), 82–87 (GYHNGG), 89–94 (GYNNGG), 102–107 (GYNNGG), and 108–113 (GYHGGG). The interval 37–113 (GYNNGGGYHN…NNGGGYHGGG (77 aa)) is 11 X 6 AA tandem repeats of G-Y-[NH]-N-G -G.

Belongs to the GRP family.

Its subcellular location is the membrane. In Oxybasis rubra (Red goosefoot), this protein is Glycine-rich protein HC1.